A 328-amino-acid chain; its full sequence is Beta-ketoacyl-[acyl-carrier-protein] synthase III (328 aa).

Active-site residues include Cys-122 and His-255. The segment at 256–260 is ACP-binding; sequence QANIR. Asn-285 is an active-site residue.

The protein belongs to the thiolase-like superfamily. FabH family. As to quaternary structure, homodimer.

The protein resides in the cytoplasm. The enzyme catalyses malonyl-[ACP] + acetyl-CoA + H(+) = 3-oxobutanoyl-[ACP] + CO2 + CoA. It participates in lipid metabolism; fatty acid biosynthesis. Catalyzes the condensation reaction of fatty acid synthesis by the addition to an acyl acceptor of two carbons from malonyl-ACP. Catalyzes the first condensation reaction which initiates fatty acid synthesis and may therefore play a role in governing the total rate of fatty acid production. Possesses both acetoacetyl-ACP synthase and acetyl transacylase activities. Its substrate specificity determines the biosynthesis of branched-chain and/or straight-chain of fatty acids. The chain is Beta-ketoacyl-[acyl-carrier-protein] synthase III from Polynucleobacter asymbioticus (strain DSM 18221 / CIP 109841 / QLW-P1DMWA-1) (Polynucleobacter necessarius subsp. asymbioticus).